Here is a 303-residue protein sequence, read N- to C-terminus: Coenzyme PQQ synthesis protein B (303 aa).

It belongs to the PqqB family.

Its pathway is cofactor biosynthesis; pyrroloquinoline quinone biosynthesis. In terms of biological role, may be involved in the transport of PQQ or its precursor to the periplasm. This is Coenzyme PQQ synthesis protein B from Pseudomonas syringae pv. syringae (strain B728a).